A 528-amino-acid polypeptide reads, in one-letter code: CTD kinase subunit alpha (528 aa).

Polar residues predominate over residues 1 to 15 (MSYNNGNTYSKSYSR). The interval 1–148 (MSYNNGNTYS…NTSNDIKNGY (148 aa)) is disordered. Residue S14 is modified to Phosphoserine; by autocatalysis. The short motif at 37–44 (PPKRIRTD) is the Nuclear localization signal element. A compositionally biased stretch (polar residues) spans 45–103 (SGYQSNMDNISSHRVNSNDQPGHTKSRGNNNLSRYNDTSFQTSSRYQGSRYNNNNTSYE). The segment covering 104–118 (NRPKSIKRDETKAEF) has biased composition (basic and acidic residues). The segment covering 134–144 (YNNSSNTSNDI) has biased composition (polar residues). The Protein kinase domain occupies 183 to 469 (YLRIMQVGEG…ATEALQSDYF (287 aa)). Residues 189–197 (VGEGTYGKV) and K212 each bind ATP. D306 functions as the Proton acceptor in the catalytic mechanism. At T338 the chain carries Phosphothreonine. A disordered region spans residues 497 to 528 (QKRPNILSTNTNNKGNGNSNNNNNNNNDDDDK). Low complexity predominate over residues 504–522 (STNTNNKGNGNSNNNNNNN).

The protein belongs to the protein kinase superfamily. CMGC Ser/Thr protein kinase family. CDC2/CDKX subfamily. In terms of assembly, CTDK-I consists of three subunits, CTK1, CTK2 and CTK3 (also called alpha, beta and gamma). Interacts directly with the CTK2 and CTK3 subunits, this interaction is required for kinase activity. Interacts with RNA polymerase I. Interacts with SNF1, but only at low glucose concentrations. Interacts with translating ribosomes. Post-translationally, phosphorylated on Thr-338 by CAK1. Phosphorylation is essential for the elevated CTD Ser-2 phosphorylation and required to activate transcription of stationary-phase genes during the diauxic shift.

It localises to the nucleus. The protein resides in the nucleolus. The protein localises to the cytoplasm. It catalyses the reaction [DNA-directed RNA polymerase] + ATP = phospho-[DNA-directed RNA polymerase] + ADP + H(+). Catalytic subunit of the CTDK-I complex, which hyperphosphorylates the C-terminal heptapeptide repeat domain (CTD) of the largest RNA polymerase II subunit. CTDK-I phosphorylates 'Ser-5' if the CTD substrate is not phosphorylated at 'Ser-5', but will phosphorylate 'Ser-2' of a CTD substrate if 'Ser-5' is already phosphorylated. CTDK-I is also more reactive toward substrates that are prephosphorylated at 'Ser-2' or 'Ser-5' compared with an unphosphorylated CTD substrate, therefore efficiently creating doubly phosphorylated CTD repeats. Involved in RNA polymerase II transcriptional elongation, and through PTI1, pre-mRNA 3'-end processing. Participates in both positive and negative regulation of CTD phosphorylation. Required for DNA damage induced transcription, including the expression of the RNR genes, and reprogramming of gene expression upon amino acid starvation. Required for SET2 mediated H3K36 methylation. Also regulates H3K4 methylation. Controls the maintenance of suppressive chromatin in the coding regions of genes by both promoting H3K36 methylation, which leads to histone deacetylation, and catalyzing phosphorylation of the CTD required to localize H3K4 chromatin modification specifically to the 5' ends of genes, thereby creating a boundary for H3K4 methylation that prevents a mark associated with transcriptional initiation from spreading into the bodies of genes. Involved in RNA polymerase I transcription. Involved in telomere maintenance. Acts together with SNF1 to induce GSY2 transcription in response to glucose limitation. Involved in the adaptation to alternative carbon sources, including galactose, glycerol and ethanol, but not raffinose. Required for the integrity of the rDNA locus. Functions in translation elongation by enhancing decoding fidelity. Needed for translational accuracy by phosphorylating RPS2. This is CTD kinase subunit alpha (CTK1) from Saccharomyces cerevisiae (strain ATCC 204508 / S288c) (Baker's yeast).